The chain runs to 678 residues: UvrABC system protein B (678 aa).

The Helicase ATP-binding domain occupies 35 to 422 (EGVSDGLMFQ…ADNVVEQVVR (388 aa)). Position 48-55 (48-55 (GVTGSGKT)) interacts with ATP. A Beta-hairpin motif is present at residues 101–124 (YYDYYQPEAYVPTRDLFIEKDSSI). The region spanning 439 to 605 (QVDDLLGEIH…GVSKAVRELI (167 aa)) is the Helicase C-terminal domain. The UVR domain occupies 633–668 (AREIRRLEKLMMDHARNLEFEQAAAARDALNALKSR).

It belongs to the UvrB family. Forms a heterotetramer with UvrA during the search for lesions. Interacts with UvrC in an incision complex.

The protein localises to the cytoplasm. The UvrABC repair system catalyzes the recognition and processing of DNA lesions. A damage recognition complex composed of 2 UvrA and 2 UvrB subunits scans DNA for abnormalities. Upon binding of the UvrA(2)B(2) complex to a putative damaged site, the DNA wraps around one UvrB monomer. DNA wrap is dependent on ATP binding by UvrB and probably causes local melting of the DNA helix, facilitating insertion of UvrB beta-hairpin between the DNA strands. Then UvrB probes one DNA strand for the presence of a lesion. If a lesion is found the UvrA subunits dissociate and the UvrB-DNA preincision complex is formed. This complex is subsequently bound by UvrC and the second UvrB is released. If no lesion is found, the DNA wraps around the other UvrB subunit that will check the other stand for damage. The chain is UvrABC system protein B from Bordetella pertussis (strain Tohama I / ATCC BAA-589 / NCTC 13251).